The sequence spans 125 residues: Monothiol glutaredoxin-S2 (125 aa).

In terms of domain architecture, Glutaredoxin spans 28–124; that stretch reads AERVGRLVRE…PRLREVGALC (97 aa). Cys-48 serves as a coordination point for [2Fe-2S] cluster.

Belongs to the glutaredoxin family. CC-type subfamily.

Its subcellular location is the cytoplasm. May only reduce GSH-thiol disulfides, but not protein disulfides. This chain is Monothiol glutaredoxin-S2 (GRXS2), found in Oryza sativa subsp. japonica (Rice).